We begin with the raw amino-acid sequence, 626 residues long: ATP-dependent zinc metalloprotease FtsH 3 (626 aa).

At 1-7 (MNKLFRS) the chain is on the cytoplasmic side. The helical transmembrane segment at 8–28 (LAFYMLILVISVAIAVQLGGT) threads the bilayer. The Extracellular segment spans residues 29-103 (SQQTTQLVYS…LDFRQDNTSG (75 aa)). A helical transmembrane segment spans residues 104–124 (IWAMLLQTLVPVVLVLLAFFF). The Cytoplasmic segment spans residues 125 to 626 (IMQQTQGSGN…GGTSQVAPAF (502 aa)). 197-204 (GPPGTGKT) is an ATP binding site. His-420 contacts Zn(2+). Glu-421 is a catalytic residue. Zn(2+)-binding residues include His-424 and Asp-496. The segment at 602 to 626 (PPRPKPEPLKPRMVGGGTSQVAPAF) is disordered.

In the central section; belongs to the AAA ATPase family. This sequence in the C-terminal section; belongs to the peptidase M41 family. Homohexamer. Zn(2+) is required as a cofactor.

The protein resides in the cell membrane. Its function is as follows. Acts as a processive, ATP-dependent zinc metallopeptidase for both cytoplasmic and membrane proteins. Plays a role in the quality control of integral membrane proteins. The protein is ATP-dependent zinc metalloprotease FtsH 3 of Symbiobacterium thermophilum (strain DSM 24528 / JCM 14929 / IAM 14863 / T).